Consider the following 365-residue polypeptide: MWPLSHRHLCLAFLLVCVLSAISFFLHIYQDSIRHGLGLSILCPDRLVTAPVAIFCLPDSPMSPNTSSPCPQHPASLSGTWTIYPDGRFGNQMGQYATLLALAQLNGRRAFILPAMHATLAPVFRITLPVLAPEVDSSTPWRELQLHDWMSEEYADLGDPFLKLSGFPCSWTFFHHLREQIRSEFTLHDHLREEAQSVLRRLRLGRSGDRPRTFVGVHVRRGDYLQVMPQRWKGVVGNSAYLREAMDWFRARHEAPVFVVTSNGMEWCRENIDASKGDVMFAGDGQEASPWKDFALLTQCNHTIMTIGTFGFWAAYLAGGDTVYLANFTLPDSEFLKIFKPEAAFLPEWVGINADLSPLWTLAEP.

At 1–8 (MWPLSHRH) the chain is on the cytoplasmic side. The chain crosses the membrane as a helical; Signal-anchor for type II membrane protein span at residues 9-25 (LCLAFLLVCVLSAISFF). Residues 26–365 (LHIYQDSIRH…LSPLWTLAEP (340 aa)) lie on the Lumenal side of the membrane. N-linked (GlcNAc...) asparagine glycans are attached at residues N65, N301, and N327.

Belongs to the glycosyltransferase 11 family.

It localises to the golgi apparatus. The protein resides in the golgi stack membrane. The catalysed reaction is a beta-D-galactosyl-(1-&gt;4)-N-acetyl-beta-D-glucosaminyl derivative + GDP-beta-L-fucose = an alpha-L-Fuc-(1-&gt;2)-beta-D-Gal-(1-&gt;4)-beta-D-GlcNAc derivative + GDP + H(+). The enzyme catalyses a ganglioside GA1 + GDP-beta-L-fucose = a ganglioside Fuc-GA1 + GDP + H(+). It catalyses the reaction a beta-D-Gal-(1-&gt;3)-beta-D-GlcNAc-(1-&gt;3)-beta-D-Gal-(1-&gt;4)-beta-D-Glc-(1&lt;-&gt;1')-Cer(d18:1(4E)) + GDP-beta-L-fucose = alpha-L-fucosyl-(1-&gt;2)- beta-D-galactosyl-(1-&gt;3)-N-acetyl-beta-D-glucosaminyl-(1-&gt;3)-beta-D-galactosyl-(1-&gt;4)-beta-D-glucosyl-(1&lt;-&gt;1')-N-acylsphing-4-enine + GDP + H(+). It carries out the reaction a neolactoside nLc4Cer(d18:1(4E)) + GDP-beta-L-fucose = a neolactoside IV(2)-alpha-Fuc-nLc4Cer(d18:1(4E)) + GDP + H(+). The catalysed reaction is a ganglioside GM1 + GDP-beta-L-fucose = a ganglioside Fuc-GM1 + GDP + H(+). The enzyme catalyses beta-D-galactosyl-(1-&gt;3)-N-acetyl-D-galactosamine + GDP-beta-L-fucose = alpha-L-fucosyl-(1-&gt;2)-beta-D-galactosyl-(1-&gt;3)-N-acetyl-D-galactosamine + GDP + H(+). Its pathway is protein modification; protein glycosylation. Catalyzes the transfer of L-fucose, from a guanosine diphosphate-beta-L-fucose, to the terminal galactose residue of glycoconjugates through an alpha(1,2) linkage leading to H antigen synthesis that is an intermediate substrate in the synthesis of ABO blood group antigens. H antigen is essential for maturation of the glomerular layer of the main olfactory bulb, in cell migration and early cell-cell contacts during tumor associated angiogenesis. Preferentially fucosylates soluble lactose and to a lesser extent fucosylates glycolipids gangliosides GA1 and GM1a. In Mico humeralifer (Black and white tassel-ear marmoset), this protein is Galactoside alpha-(1,2)-fucosyltransferase 1.